A 276-amino-acid chain; its full sequence is Undecaprenyl-diphosphatase (276 aa).

7 helical membrane-spanning segments follow: residues 46–66 (AGASFAAVIQLGSLGAVLIYF), 94–114 (LMGILVGTLPIVIAGWAVKAI), 122–142 (LWVVAAAAIGLALALGWAERV), 152–172 (LGIGDGLWVGLAQALALIPGV), 196–216 (SFLLGIPALFLAGVAEFIAEF), 226–246 (LGTLSAFVFSYGSIDWLIRFL), and 253–273 (VFIVYRIGFGLFIFLGLALGF).

The protein belongs to the UppP family.

The protein resides in the cell inner membrane. The enzyme catalyses di-trans,octa-cis-undecaprenyl diphosphate + H2O = di-trans,octa-cis-undecaprenyl phosphate + phosphate + H(+). Functionally, catalyzes the dephosphorylation of undecaprenyl diphosphate (UPP). Confers resistance to bacitracin. The sequence is that of Undecaprenyl-diphosphatase from Synechococcus sp. (strain JA-3-3Ab) (Cyanobacteria bacterium Yellowstone A-Prime).